A 392-amino-acid polypeptide reads, in one-letter code: uncharacterized protein (392 aa).

It belongs to the ROK (NagC/XylR) family.

This is an uncharacterized protein from Sinorhizobium fredii (strain NBRC 101917 / NGR234).